The sequence spans 48 residues: Cuticle protein 10 (48 aa).

This chain is Cuticle protein 10, found in Limulus polyphemus (Atlantic horseshoe crab).